The following is a 447-amino-acid chain: MSQRKYFGTDGVRGEVGGPVINAAFALRLGYAAGRVLVRRNASRQGGRPQVLIGKDTRISGYMLESALEAGLSAAGIDVVLAGPIPTPGVAYLTRALRLVAGIVISASHNPYQDNGIKFFSAEGTKLPDEVEAEIEAALEQELGCVKSEDLGRARRMSDSQGRYIEFCKSTVPHSLDLHGMKLVVDAANGAAYHIAPHVFRELGAEVYAIGVSPDGFNINKGVGALHPESLAEEVKARGAHYGIALDGDADRLQMVDASGRIYNGDELLYAIVRDRMRQGKVEGVVGTLMTNYGFELAMGRLGVAFERANVGDRYVLEQLLARGWQFGGESSGHLLCLDCHTTGDGTIAALQVLAALHANKASLSDWIADLRLYPQVMINVPLQPGQDWKTHAGLAAARAGVEAELAGRGRVLIRASGTEPKLRLMVEAEDFALAQASAQKLADSLG.

The Phosphoserine intermediate role is filled by Ser108. The Mg(2+) site is built by Ser108, Asp247, Asp249, and Asp251. Ser108 is modified (phosphoserine).

It belongs to the phosphohexose mutase family. The cofactor is Mg(2+). Post-translationally, activated by phosphorylation.

It carries out the reaction alpha-D-glucosamine 1-phosphate = D-glucosamine 6-phosphate. In terms of biological role, catalyzes the conversion of glucosamine-6-phosphate to glucosamine-1-phosphate. This Bordetella avium (strain 197N) protein is Phosphoglucosamine mutase.